A 257-amino-acid polypeptide reads, in one-letter code: Tryptophan synthase alpha chain (257 aa).

Residues Glu44 and Asp55 each act as proton acceptor in the active site.

The protein belongs to the TrpA family. In terms of assembly, tetramer of two alpha and two beta chains.

The enzyme catalyses (1S,2R)-1-C-(indol-3-yl)glycerol 3-phosphate + L-serine = D-glyceraldehyde 3-phosphate + L-tryptophan + H2O. The protein operates within amino-acid biosynthesis; L-tryptophan biosynthesis; L-tryptophan from chorismate: step 5/5. Functionally, the alpha subunit is responsible for the aldol cleavage of indoleglycerol phosphate to indole and glyceraldehyde 3-phosphate. This Chlamydia felis (strain Fe/C-56) (Chlamydophila felis) protein is Tryptophan synthase alpha chain.